The sequence spans 415 residues: Serine--tRNA ligase (415 aa).

An L-serine-binding site is contributed by 231–233; sequence TAE. 262–264 is an ATP binding site; sequence RSE. Glutamate 285 lines the L-serine pocket. 349–352 provides a ligand contact to ATP; sequence EISS. Residue serine 383 coordinates L-serine.

The protein belongs to the class-II aminoacyl-tRNA synthetase family. Type-1 seryl-tRNA synthetase subfamily. As to quaternary structure, homodimer. The tRNA molecule binds across the dimer.

Its subcellular location is the cytoplasm. It catalyses the reaction tRNA(Ser) + L-serine + ATP = L-seryl-tRNA(Ser) + AMP + diphosphate + H(+). The enzyme catalyses tRNA(Sec) + L-serine + ATP = L-seryl-tRNA(Sec) + AMP + diphosphate + H(+). It participates in aminoacyl-tRNA biosynthesis; selenocysteinyl-tRNA(Sec) biosynthesis; L-seryl-tRNA(Sec) from L-serine and tRNA(Sec): step 1/1. In terms of biological role, catalyzes the attachment of serine to tRNA(Ser). Is also able to aminoacylate tRNA(Sec) with serine, to form the misacylated tRNA L-seryl-tRNA(Sec), which will be further converted into selenocysteinyl-tRNA(Sec). This is Serine--tRNA ligase from Helicobacter acinonychis (strain Sheeba).